Here is a 688-residue protein sequence, read N- to C-terminus: Subtilisin-like protease 1 (688 aa).

An N-terminal signal peptide occupies residues 1 to 25 (MMLNKKVVALCTLTLHLFCIFLCLG). A propeptide spans 26-217 (KEVRSEENGK…IESDKLVSAD (192 aa)) (inhibition peptide). Residues 99 to 129 (EKNKNDNHNNNNNNISSSSSSSSNTFGEEKE) form a disordered region. Over residues 106 to 122 (HNNNNNNISSSSSSSSN) the composition is skewed to low complexity. Residue Asn-112 is glycosylated (N-linked (GlcNAc...) asparagine). 3 residues coordinate Ca(2+): Asn-145, Thr-148, and Pro-150. The N-linked (GlcNAc...) asparagine glycan is linked to Asn-171. Gly-205 contacts Ca(2+). N-linked (GlcNAc...) asparagine glycosylation occurs at Asn-261. Disordered stretches follow at residues 264-284 (HAAT…DTFS) and 303-332 (NNNN…RPGK). The span at 303–328 (NNNNYYYSHSSNGHNSSSRNSSSSRS) shows a compositional bias: low complexity. N-linked (GlcNAc...) asparagine glycosylation is found at Asn-317 and Asn-322. Asp-337 lines the Ca(2+) pocket. Residues 343 to 661 (QWGLDLSRLD…AGYADINKAV (319 aa)) enclose the Peptidase S8 domain. Cystine bridges form between Cys-369-Cys-479 and Cys-458-Cys-475. Asp-372 functions as the Charge relay system in the catalytic mechanism. Asp-381, Glu-392, Arg-396, Phe-399, Asp-400, Asp-401, Asp-402, Asn-404, Ile-406, Asp-408, and Asp-409 together coordinate Ca(2+). Asn-417 carries an N-linked (GlcNAc...) asparagine glycan. Residue His-428 is the Charge relay system of the active site. Positions 439, 442, 444, and 446 each coordinate Ca(2+). Residues Asn-488, Asn-501, and Asn-520 are each glycosylated (N-linked (GlcNAc...) asparagine). Cysteines 521 and 534 form a disulfide. Asn-603 carries N-linked (GlcNAc...) asparagine glycosylation. Ser-606 functions as the Charge relay system in the catalytic mechanism. N-linked (GlcNAc...) asparagine glycosylation occurs at Asn-675.

This sequence belongs to the peptidase S8 family. Heterodimer between p54 form and prodomain p31; the interaction inhibits p54 catalytic activity. Heterodimer p31-p54 is monomeric at basic pH and dimeric at acidic pH; dimerization is driven by the N-terminal prodomain (p31). It depends on Ca(2+) as a cofactor. In terms of processing, the prodomain (p31) is cleaved, probably by autocatalysis, during the transport to or in the Golgi apparatus, and remains non-covalently associated with the p54 form as an inhibitor. p54 is further cleaved into the p47 form. The p54-to-p47 conversion can be also autocatalytic. This cleavage is likely occurring in the exoneme prior to egress and is mediated by PMX/plasmepsin X. Heterodimer p31-p54 is activated by cleavage of prodomain (p31) by the aspartic protease PMX; cleavage by PMX abolishes inhibitory capacity of p31. Primary autocatalytic processing of SUB1 is essential for parasite growth; the p54-to-p47 conversion is dispensable for SUB1 functions in the parasites. Post-translationally, the disulfide bond between Cys-521 and Cys-534 acts as a redox-sensitive disulfide switch. The oxidized form is required for catalytic activity. The relevance of the N-glycosylation is not clear. In an insect expression system, SUB1 glycosylation appears to affect its processing into the active mature form suggesting that SUB1 may not be N-glycosylated in parasites.

The protein localises to the secreted. It localises to the parasitophorous vacuole lumen. It catalyses the reaction Hydrolysis of proteins with broad specificity for peptide bonds, and a preference for a large uncharged residue in P1. Hydrolyzes peptide amides.. P54 and probably p47 forms are inhibited by the non-covalent interaction with the cleaved propeptide. Inhibited by subtilisin propeptide-like protein SUB1-ProM. Inhibited by small molecule MRT12113. Serine protease which plays an essential role in merozoite invasion of and egress from host erythrocytes by processing and activating various merozoite surface and parasitophorous vacuole proteins. Mediates the proteolytic maturation of serine proteases SERA4, SERA5 and SERA6 just prior to merozoite egress. Prior to merozoite egress, cleaves merozoite surface proteins MSP1, MSP6 and MSP7, which form the MSP1/6/7 complex, and thereby may prime the parasite cell surface for invasion of fresh erythrocytes. Prior to merozoite egress, cleaves MSRP2 converting it to MSRP2 p25 form, and RAP1 converting it to RAP1 p67 form. This chain is Subtilisin-like protease 1, found in Plasmodium falciparum (isolate 3D7).